The chain runs to 392 residues: Arogenate dehydratase/prephenate dehydratase 1, chloroplastic (392 aa).

The N-terminal 48 residues, 1–48 (MALRCFPIWVCPQTTHHRSPLMGLAEFDADKRRRFCLWECSSSASQRA), are a transit peptide targeting the chloroplast. Residues 107 to 282 (RISFQGIPGA…NVTRFLILAR (176 aa)) enclose the Prephenate dehydratase domain. The ACT domain maps to 296–387 (SIVFSLEEGP…SFIRILGCYP (92 aa)).

As to expression, expressed in roots, leaves, stems, flowers and siliques.

Its subcellular location is the plastid. It localises to the chloroplast stroma. The enzyme catalyses L-arogenate + H(+) = L-phenylalanine + CO2 + H2O. It carries out the reaction prephenate + H(+) = 3-phenylpyruvate + CO2 + H2O. It participates in amino-acid biosynthesis; L-phenylalanine biosynthesis; L-phenylalanine from L-arogenate: step 1/1. It functions in the pathway amino-acid biosynthesis; L-phenylalanine biosynthesis; phenylpyruvate from prephenate: step 1/1. Functionally, converts the prephenate produced from the shikimate-chorismate pathway into phenylalanine. Dehydratase that uses arogenate and prephenate as substrates. Utilzes more efficiently arogenate than prephenate. The protein is Arogenate dehydratase/prephenate dehydratase 1, chloroplastic of Arabidopsis thaliana (Mouse-ear cress).